The following is a 440-amino-acid chain: Metacaspase-1 (440 aa).

Residues 1–134 form a disordered region; the sequence is MFPGSGRKTY…NPQGFGQNSG (134 aa). Positions 14 to 51 are enriched in pro residues; the sequence is APPPGPPNGYQYGPPPGAQGQYPPPQGYPPQGYPPQGY. Residues 52–81 show a composition bias toward low complexity; it reads PPQGYAPQGYPPQGYAPQGYAPQGYQQQGG. A compositionally biased stretch (gly residues) spans 82–94; the sequence is QQQGGQQQGGQQQ. Residues 98-110 are compositionally biased toward polar residues; it reads RQTYATQEAQNFG. Active-site residues include histidine 230 and cysteine 286.

This sequence belongs to the peptidase C14B family.

Its function is as follows. Involved in cell death (apoptosis). The chain is Metacaspase-1 (MCA1) from Debaryomyces hansenii (strain ATCC 36239 / CBS 767 / BCRC 21394 / JCM 1990 / NBRC 0083 / IGC 2968) (Yeast).